Reading from the N-terminus, the 447-residue chain is Tetratricopeptide repeat protein 23 (447 aa).

TPR repeat units lie at residues 45 to 78 (LHLC…TRIC), 137 to 170 (IELF…SKEL), 186 to 219 (ARIR…VEIS), and 356 to 389 (AETY…QTLL).

As to quaternary structure, found Associated with the EvC complex composed of EFCAB7, IQCE, EVC2 and EVC.

Its subcellular location is the cell projection. The protein resides in the cilium. Participates positively in the ciliary Hedgehog (Hh) signaling. This is Tetratricopeptide repeat protein 23 (TTC23) from Homo sapiens (Human).